Reading from the N-terminus, the 243-residue chain is Probable transcriptional regulatory protein BRE_29 (243 aa).

It belongs to the TACO1 family.

The protein localises to the cytoplasm. The polypeptide is Probable transcriptional regulatory protein BRE_29 (Borrelia recurrentis (strain A1)).